The following is a 315-amino-acid chain: Malate dehydrogenase (315 aa).

NAD(+) is bound by residues 7–12 (GAGNIG) and aspartate 32. Substrate-binding residues include arginine 81 and arginine 87. Residues asparagine 94 and 117–119 (VTN) each bind NAD(+). Substrate is bound by residues asparagine 119 and arginine 150. Residue histidine 174 is the Proton acceptor of the active site.

Belongs to the LDH/MDH superfamily. MDH type 3 family.

It catalyses the reaction (S)-malate + NAD(+) = oxaloacetate + NADH + H(+). In terms of biological role, catalyzes the reversible oxidation of malate to oxaloacetate. The sequence is that of Malate dehydrogenase from Neorickettsia sennetsu (strain ATCC VR-367 / Miyayama) (Ehrlichia sennetsu).